Here is a 1028-residue protein sequence, read N- to C-terminus: RNA cytidine acetyltransferase 1 (1028 aa).

ATP-binding positions include 286–295 and R460; that span reads GRGKSAALGL. In terms of domain architecture, N-acetyltransferase spans 548–731; it reads VLLGPVDESK…FAPFYISQIP (184 aa). Residues 619 to 621, 626 to 632, and K719 each bind acetyl-CoA; these read IAV and MKMGYGS. The segment at 989-1028 is disordered; sequence ISIESTKTDNKKEKPSGFDKSAKKRGNDKHSSTSNKKRRA. Residues 994–1009 show a composition bias toward basic and acidic residues; it reads TKTDNKKEKPSGFDKS.

It belongs to the RNA cytidine acetyltransferase family. NAT10 subfamily.

It localises to the nucleus. Its subcellular location is the nucleolus. It catalyses the reaction a cytidine in 18S rRNA + acetyl-CoA + ATP + H2O = an N(4)-acetylcytidine in 18S rRNA + ADP + phosphate + CoA + H(+). It carries out the reaction a cytidine in tRNA + acetyl-CoA + ATP + H2O = an N(4)-acetylcytidine in tRNA + ADP + phosphate + CoA + H(+). In terms of biological role, RNA cytidine acetyltransferase with specificity toward both 18S rRNA and tRNAs. Catalyzes the formation of N(4)-acetylcytidine (ac4C) in 18S rRNA. Required for early nucleolar cleavages of precursor rRNA at sites A0, A1 and A2 during 18S rRNA synthesis. Catalyzes the formation of ac4C in serine and leucine tRNAs. Requires a tRNA-binding adapter protein for full tRNA acetyltransferase activity but not for 18S rRNA acetylation. The chain is RNA cytidine acetyltransferase 1 from Arabidopsis thaliana (Mouse-ear cress).